The sequence spans 156 residues: Small ribosomal subunit protein uS7 (156 aa).

It belongs to the universal ribosomal protein uS7 family. Part of the 30S ribosomal subunit. Contacts proteins S9 and S11.

One of the primary rRNA binding proteins, it binds directly to 16S rRNA where it nucleates assembly of the head domain of the 30S subunit. Is located at the subunit interface close to the decoding center, probably blocks exit of the E-site tRNA. This Shigella dysenteriae serotype 1 (strain Sd197) protein is Small ribosomal subunit protein uS7.